A 414-amino-acid polypeptide reads, in one-letter code: L-cysteine:1D-myo-inositol 2-amino-2-deoxy-alpha-D-glucopyranoside ligase (414 aa).

Cys44 provides a ligand contact to Zn(2+). Residues 44–47, Thr59, and 82–84 contribute to the L-cysteinyl-5'-AMP site; these read CGIT and NIT. The short motif at 46-56 is the 'HIGH' region element; the sequence is ITPYDSTHLGH. The 'ERGGDP' region motif lies at 188–193; sequence ERGGDP. Residue Trp228 coordinates L-cysteinyl-5'-AMP. Cys232 contacts Zn(2+). 250 to 252 contributes to the L-cysteinyl-5'-AMP binding site; that stretch reads GSD. His257 serves as a coordination point for Zn(2+). Ile284 is an L-cysteinyl-5'-AMP binding site. The short motif at 290 to 294 is the 'KMSKS' region element; sequence KMSKS.

Belongs to the class-I aminoacyl-tRNA synthetase family. MshC subfamily. As to quaternary structure, monomer. Requires Zn(2+) as cofactor.

The catalysed reaction is 1D-myo-inositol 2-amino-2-deoxy-alpha-D-glucopyranoside + L-cysteine + ATP = 1D-myo-inositol 2-(L-cysteinylamino)-2-deoxy-alpha-D-glucopyranoside + AMP + diphosphate + H(+). Catalyzes the ATP-dependent condensation of GlcN-Ins and L-cysteine to form L-Cys-GlcN-Ins. The chain is L-cysteine:1D-myo-inositol 2-amino-2-deoxy-alpha-D-glucopyranoside ligase from Corynebacterium aurimucosum (strain ATCC 700975 / DSM 44827 / CIP 107346 / CN-1) (Corynebacterium nigricans).